Reading from the N-terminus, the 37-residue chain is Cytochrome b6-f complex subunit 5 (37 aa).

The helical transmembrane segment at 5–25 (LLSGIILGLIPVTLSGLLVAA) threads the bilayer.

The protein belongs to the PetG family. In terms of assembly, the 4 large subunits of the cytochrome b6-f complex are cytochrome b6, subunit IV (17 kDa polypeptide, PetD), cytochrome f and the Rieske protein, while the 4 small subunits are PetG, PetL, PetM and PetN. The complex functions as a dimer.

Its subcellular location is the plastid. It is found in the chloroplast thylakoid membrane. Its function is as follows. Component of the cytochrome b6-f complex, which mediates electron transfer between photosystem II (PSII) and photosystem I (PSI), cyclic electron flow around PSI, and state transitions. PetG is required for either the stability or assembly of the cytochrome b6-f complex. This chain is Cytochrome b6-f complex subunit 5, found in Porphyra purpurea (Red seaweed).